We begin with the raw amino-acid sequence, 610 residues long: 1,8-cineol synthase, chloroplastic (610 aa).

Residues 1-51 constitute a chloroplast transit peptide; it reads MNHHLIITPIFHLQIMLPVATLKRPPPPAATCSIYSFSRGTPSLVSKARLS. The (2E)-geranyl diphosphate site is built by arginine 322, aspartate 359, aspartate 363, arginine 500, and asparagine 503. Aspartate 359 and aspartate 363 together coordinate Mg(2+). The short motif at 359–363 is the DDXXD motif element; it reads DDVYD. Residues asparagine 503, threonine 507, and glutamate 511 each coordinate Mg(2+).

The protein belongs to the terpene synthase family. Tpsb subfamily. In terms of assembly, monomer. Requires Mg(2+) as cofactor. Mn(2+) serves as cofactor. In terms of tissue distribution, confined to buds and flowers.

Its subcellular location is the plastid. It is found in the chloroplast. It catalyses the reaction (2E)-geranyl diphosphate + H2O = 1,8-cineole + diphosphate. The catalysed reaction is (2E)-geranyl diphosphate = limonene + diphosphate. The enzyme catalyses (2E)-geranyl diphosphate = sabinene + diphosphate. It carries out the reaction (2E)-geranyl diphosphate = (E)-beta-ocimene + diphosphate. It catalyses the reaction (2E)-geranyl diphosphate = beta-myrcene + diphosphate. The catalysed reaction is (2E)-geranyl diphosphate = alpha-pinene + diphosphate. The enzyme catalyses (2E)-geranyl diphosphate + H2O = (S)-alpha-terpineol + diphosphate. The protein operates within secondary metabolite biosynthesis; terpenoid biosynthesis. Its function is as follows. Monoterpene synthase involved in the biosynthesis of monoterpene natural products of the 'cineole cassette', volatile compounds present in floral scent. Catalyzes the conversion of (2E)-geranyl diphosphate (GPP) into 1,8-cineole and, as minor products, limonene, sabinene, (E)-beta-ocimene, beta-myrcene, alpha-pinene and alpha-terpineol. In Nicotiana suaveolens (Australian tobacco), this protein is 1,8-cineol synthase, chloroplastic.